We begin with the raw amino-acid sequence, 342 residues long: Antihemorrhagic factor HSF (342 aa).

Residues 1–19 (MNSLVALVLLGQIIGSTLS) form the signal peptide. Cystatin fetuin-A-type domains follow at residues 22–130 (VRGD…VKCH) and 141–254 (RNCS…SNCV). Residues 23–25 (RGD) carry the Cell attachment site motif. Positions 24-108 (GDLECDDKEA…RQQHNHAVEM (85 aa)) are indispensable for metalloproteinase inhibition. Cystine bridges form between C28–C332, C85–C96, C110–C129, C143–C146, C205–C217, and C230–C253. Residue N142 is glycosylated (N-linked (GlcNAc...) asparagine). A glycan (N-linked (GlcNAc...) asparagine) is linked at N204. N-linked (GlcNAc...) asparagine glycosylation is present at N282.

The protein belongs to the fetuin family. Post-translationally, cys-63 may exist in a mixed disulfide form with a thiol compound such as glutathione. Expressed by the liver.

The protein localises to the secreted. Its function is as follows. Inhibits hemorrhagic and proteolytic activities of metalloproteinases (HR1A, HR1B, HR2a, HR2b and H2 proteinase from T.flavodidis and brevilysins H3, H4, H6 and L4 from A.halys brevicaudus). Has no effect on brevilysins H2. Has no effect on papain and cathepsin-B. The chain is Antihemorrhagic factor HSF from Protobothrops flavoviridis (Habu).